An 881-amino-acid chain; its full sequence is MTELHPDLRENVRLLGDLLGQSILRFPGQDCYDRIEEIRAAAKADRRQESGSGQRLVKLLGQLSDDELLPVTRAFNQFLNLANLAEQYHGIRRKQGHPSDLMVESLGEVFDRLKSGGIDPQELHRKVADLRIEFVLTAHPTEVARRTLILKYDEMSDCLSRLDHDDLMPGEREEIVDRLSLLIAEAWHTDEIRHERPTAVDEAKWGFAVIENSLWQALPKFLRSLDTSLSEATGQGLPLQVSPIRIASWMGGDRDGNPNVTHEVTREVFLLGRWMAADLYLRDIQALRAELSMWQASDELRAEVGDSREPYRQVLAQLRERLIKTREWAEASVKGEPADDSGILFENEDLTGPLELCYRSLMECGLETIANGPLLDTIRRAHTFGLPLIRLDIRQEASRHAEAVAEMVNYLGLGDYLSWSEQERQAFLVKELKGRRPLVPRNWQPSEPVREVLATCEVVAGQTPEALGSYVISMASKPSDVLNVILLLREAGMAFPMRVVPLFETLDDLKGAPDSMAALYEVDWYREYCSGRQEVMIGYSDSSKDAGQLMAAWAQYQAQEKLTEVANRYGVHLTLFHGRGGTVGRGGGPANRAILSQPPGSVNGSFRITEQGEMIRFKFGLPRLAVQSLTLYTTAVIEATLAPPPVPKDEWREVMDWLTERSLRSYREVVRENPDFVPYFRQVTPETALGKLALGSRPARRKATGGVESLRAIPWIFAWTQMRLMLPSWLGSDVALEQAAQADRLPELREMMQGWPFFRTYVDMLEMVLAKADLRIASYYEQTLVEDEHLLALGQSLRQRLQGCIERLLELKQQQTLLEQEPVFAHSMKVRNPYTDPLHYLQAELLRRDRESEGAGKVPELVERALKVTMAGISAGMRNTG.

Active-site residues include His139 and Lys544.

Belongs to the PEPCase type 1 family. The cofactor is Mg(2+).

The enzyme catalyses oxaloacetate + phosphate = phosphoenolpyruvate + hydrogencarbonate. Forms oxaloacetate, a four-carbon dicarboxylic acid source for the tricarboxylic acid cycle. This chain is Phosphoenolpyruvate carboxylase, found in Marinobacter nauticus (strain ATCC 700491 / DSM 11845 / VT8) (Marinobacter aquaeolei).